The chain runs to 281 residues: Endochitinase B (281 aa).

Residues 1–33 (MAMAKAGAPRVSAAQLVTLGLSLLCAVAGPAAA) form the signal peptide. The Chitin-binding type-1 domain occupies 34–68 (QNCGCQPNVCCSKFGYCGTTDEYCGDGCQSGPCRS). 4 cysteine pairs are disulfide-bonded: cysteine 36–cysteine 44, cysteine 38–cysteine 50, cysteine 43–cysteine 57, and cysteine 61–cysteine 66. A hinge region (Gly-rich) region spans residues 69 to 78 (GGGGSSGGGG). Positions 79–281 (ANVASVVTGS…GVDPGPNLTC (203 aa)) are catalytic. Cysteine 101 and cysteine 150 are joined by a disulfide. The active-site Proton donor is the glutamate 145. N-linked (GlcNAc...) asparagine glycosylation occurs at asparagine 156. 2 disulfides stabilise this stretch: cysteine 162/cysteine 171 and cysteine 249/cysteine 281. N-linked (GlcNAc...) asparagine glycosylation occurs at asparagine 278.

This sequence belongs to the glycosyl hydrolase 19 family. Chitinase class I subfamily.

It localises to the secreted. It carries out the reaction Random endo-hydrolysis of N-acetyl-beta-D-glucosaminide (1-&gt;4)-beta-linkages in chitin and chitodextrins.. Functionally, defense against chitin-containing fungal pathogens. Its action is countered by fungal polyglycine hydrolases, that cleaves within its hinge region (Gly-rich) to disrupt chitin-binding. The polypeptide is Endochitinase B (Zea mays (Maize)).